Here is a 329-residue protein sequence, read N- to C-terminus: Pantothenate kinase (329 aa).

Positions 1–21 are disordered; the sequence is MISPVPSIPRSAHRQRPEATP. Residue 107-114 participates in ATP binding; it reads GSVAVGKS.

It belongs to the prokaryotic pantothenate kinase family.

It localises to the cytoplasm. It carries out the reaction (R)-pantothenate + ATP = (R)-4'-phosphopantothenate + ADP + H(+). The protein operates within cofactor biosynthesis; coenzyme A biosynthesis; CoA from (R)-pantothenate: step 1/5. This chain is Pantothenate kinase (coaA), found in Streptomyces coelicolor (strain ATCC BAA-471 / A3(2) / M145).